The chain runs to 170 residues: Heat shock protein beta-7 (170 aa).

The interval 1–39 (MSHRTSSTFRAERSFHSSSSSSSSSTSSSASRALPAQDP) is disordered. The required for localization to SC35 splicing speckles stretch occupies residues 1–71 (MSHRTSSTFR…PLAFPARPGG (71 aa)). Over residues 16–31 (HSSSSSSSSSTSSSAS) the composition is skewed to low complexity. Positions 62–170 (PLAFPARPGG…QQTFRTEIKI (109 aa)) constitute a sHSP domain.

It belongs to the small heat shock protein (HSP20) family. In terms of assembly, interacts with C-terminal domain of actin-binding protein 280. As to expression, isoform 1 is highly expressed in adult and fetal heart, skeletal muscle, and at a much lower levels in adipose tissue and in aorta. Undetectable in other tissues. Isoform 2 and isoform 3 are poorly detected in heart.

Its subcellular location is the cytoplasm. It localises to the nucleus. It is found in the cajal body. This chain is Heat shock protein beta-7 (HSPB7), found in Homo sapiens (Human).